The primary structure comprises 160 residues: Small ribosomal subunit protein uS19v (160 aa).

Belongs to the universal ribosomal protein uS19 family.

The protein localises to the cytoplasm. This is Small ribosomal subunit protein uS19v (RPS15F) from Arabidopsis thaliana (Mouse-ear cress).